Here is a 122-residue protein sequence, read N- to C-terminus: Biogenesis of lysosome-related organelles complex 1 subunit CNL1 (122 aa).

Over residues 1 to 10 (MQDNSSHSRE) the composition is skewed to basic and acidic residues. Positions 1 to 21 (MQDNSSHSRESASAGDDPLGI) are disordered. The stretch at 63 to 95 (ENTIDKNIAKFKELLEKCDTLENHYEMLNQLAI) forms a coiled coil.

This sequence belongs to the BLOC1S4 family. As to quaternary structure, component of the biogenesis of lysosome-related organelles complex-1 (BLOC-1) composed of at least BLI1, BLS1, CNL1, KXD1, SNN1 and VAB2.

The protein resides in the cytoplasm. In terms of biological role, component of the biogenesis of lysosome-related organelles complex-1 (BLOC-1), a complex that is involved in endosomal cargo sorting. In Saccharomyces cerevisiae (strain Lalvin QA23) (Baker's yeast), this protein is Biogenesis of lysosome-related organelles complex 1 subunit CNL1 (CLN1).